Consider the following 282-residue polypeptide: Protoheme IX farnesyltransferase (282 aa).

8 helical membrane passes run 40 to 60 (LVLA…FNMV), 87 to 107 (AVLA…AVNP), 108 to 128 (YVFV…TVLL), 135 to 157 (SVVF…ATGG), 162 to 184 (GVLL…STYY), 204 to 224 (AGVV…FLAF), 228 to 248 (LISA…VAVL), and 261 to 281 (AYRA…LLVL).

It belongs to the UbiA prenyltransferase family. Protoheme IX farnesyltransferase subfamily.

It localises to the cell membrane. It catalyses the reaction heme b + (2E,6E)-farnesyl diphosphate + H2O = Fe(II)-heme o + diphosphate. The protein operates within porphyrin-containing compound metabolism; heme O biosynthesis; heme O from protoheme: step 1/1. In terms of biological role, converts heme B (protoheme IX) to heme O by substitution of the vinyl group on carbon 2 of heme B porphyrin ring with a hydroxyethyl farnesyl side group. This is Protoheme IX farnesyltransferase from Thermofilum pendens (strain DSM 2475 / Hrk 5).